The following is a 346-amino-acid chain: Thioredoxin domain-containing protein R362 (346 aa).

The Thioredoxin domain maps to 212 to 345 (LTNLSNTEAN…IVKFIDETMS (134 aa)).

It is found in the virion. The polypeptide is Thioredoxin domain-containing protein R362 (Acanthamoeba polyphaga (Amoeba)).